We begin with the raw amino-acid sequence, 51 residues long: Ovomucoid (51 aa).

One can recognise a Kazal-like domain in the interval 1-49; it reads VDCSEYPQPACTTERRPVCGSNNKTYSNKCNFCNAVVKSNGTLTVSHFG. 3 cysteine pairs are disulfide-bonded: Cys-3-Cys-33, Cys-11-Cys-30, and Cys-19-Cys-51. A glycan (N-linked (GlcNAc...) asparagine) is linked at Asn-40.

Its subcellular location is the secreted. This is Ovomucoid from Polyplectron napoleonis (Palawan peacock-pheasant).